Here is a 301-residue protein sequence, read N- to C-terminus: Putative F-box/LRR-repeat protein 19 (301 aa).

In terms of domain architecture, F-box spans 18-66 (PDWSELTRECLLDIFSRLSQEQRWIGPMLVSKNWMNACYDPTLNTIFDL). LRR repeat units lie at residues 108–133 (IRHC…WIKN), 134–159 (CPNV…DISY), 160–185 (SYGI…KRNL), 231–256 (YSTL…DLRG), and 257–282 (CISL…IKPD).

This chain is Putative F-box/LRR-repeat protein 19 (FBL19), found in Arabidopsis thaliana (Mouse-ear cress).